An 81-amino-acid polypeptide reads, in one-letter code: Photosystem I iron-sulfur center (81 aa).

4Fe-4S ferredoxin-type domains lie at 2–31 and 39–68; these read SHKI…MIPW and IASA…VRVY. Positions 11, 14, 17, 21, 48, 51, 54, and 58 each coordinate [4Fe-4S] cluster.

As to quaternary structure, the eukaryotic PSI reaction center is composed of at least 11 subunits. The cofactor is [4Fe-4S] cluster.

The protein resides in the plastid. It localises to the chloroplast thylakoid membrane. The catalysed reaction is reduced [plastocyanin] + hnu + oxidized [2Fe-2S]-[ferredoxin] = oxidized [plastocyanin] + reduced [2Fe-2S]-[ferredoxin]. Apoprotein for the two 4Fe-4S centers FA and FB of photosystem I (PSI); essential for photochemical activity. FB is the terminal electron acceptor of PSI, donating electrons to ferredoxin. The C-terminus interacts with PsaA/B/D and helps assemble the protein into the PSI complex. Required for binding of PsaD and PsaE to PSI. PSI is a plastocyanin-ferredoxin oxidoreductase, converting photonic excitation into a charge separation, which transfers an electron from the donor P700 chlorophyll pair to the spectroscopically characterized acceptors A0, A1, FX, FA and FB in turn. This is Photosystem I iron-sulfur center from Chara vulgaris (Common stonewort).